Here is a 99-residue protein sequence, read N- to C-terminus: C-C motif chemokine 17 (99 aa).

Positions 1-23 are cleaved as a signal peptide; that stretch reads MMSLKLLLLVMLLLGASLQVTHA. 2 disulfide bridges follow: Cys33–Cys57 and Cys34–Cys73.

This sequence belongs to the intercrine beta (chemokine CC) family. Expressed in thymus and also in spleen, lung, lymph node, kidney, small intestine, colon and skin.

It is found in the secreted. In terms of biological role, chemokine, which displays chemotactic activity for T lymphocytes, preferentially Th2 cells, but not monocytes or granulocytes. Therefore plays an important role in a wide range of inflammatory and immunological processes. Acts by binding to CCR4 at T-cell surface. Mediates GM-CSF/CSF2-driven pain and inflammation. In the brain, required to maintain the typical, highly branched morphology of hippocampal microglia under homeostatic conditions. May be important for the appropriate adaptation of microglial morphology and synaptic plasticity to acute lipopolysaccharide (LPS)-induced neuroinflammation. Plays a role in wound healing, mainly by inducing fibroblast migration into the wound. This Felis catus (Cat) protein is C-C motif chemokine 17 (CCL17).